A 107-amino-acid chain; its full sequence is MSPTAYAIVETCGKQYWFQPGRYYDINFINAEPGDKIIFHRVLWLQHQQLLIGRPFLPNTHVEATILQHLKSKKVLVYHMRSKKKTRKKYGARQLLTRIYIHPFHGS.

It belongs to the bacterial ribosomal protein bL21 family. In terms of assembly, part of the 50S ribosomal subunit.

It localises to the plastid. Its subcellular location is the chloroplast. Its function is as follows. This protein binds to 23S rRNA. This chain is Large ribosomal subunit protein bL21c, found in Cyanidioschyzon merolae (strain NIES-3377 / 10D) (Unicellular red alga).